We begin with the raw amino-acid sequence, 492 residues long: Ribose import ATP-binding protein RbsA (492 aa).

ABC transporter domains are found at residues 3 to 239 and 238 to 492; these read IDMR…VGRK and RKLE…TGGK. ATP is bound at residue 35–42; the sequence is GENGAGKS.

The protein belongs to the ABC transporter superfamily. Ribose importer (TC 3.A.1.2.1) family. As to quaternary structure, the complex is composed of an ATP-binding protein (RbsA), two transmembrane proteins (RbsC) and a solute-binding protein (RbsB).

It localises to the cell membrane. It carries out the reaction D-ribose(out) + ATP + H2O = D-ribose(in) + ADP + phosphate + H(+). Part of the ABC transporter complex RbsABC involved in ribose import. Responsible for energy coupling to the transport system. This is Ribose import ATP-binding protein RbsA from Streptococcus agalactiae serotype V (strain ATCC BAA-611 / 2603 V/R).